Reading from the N-terminus, the 154-residue chain is uncharacterized protein (154 aa).

5 consecutive transmembrane segments (helical) span residues T5–L24, F29–A48, P53–A75, I87–V109, and A124–I146.

The protein resides in the cell membrane. This is an uncharacterized protein from Archaeoglobus fulgidus (strain ATCC 49558 / DSM 4304 / JCM 9628 / NBRC 100126 / VC-16).